Here is a 322-residue protein sequence, read N- to C-terminus: 6-deoxy-6-sulfo-D-fructose transketolase subunit SqwH (322 aa).

Belongs to the transketolase family. Forms a complex with SqwG. Thiamine diphosphate serves as cofactor.

The enzyme catalyses 6-deoxy-6-sulfo-D-fructose + D-glyceraldehyde 3-phosphate = 4-deoxy-4-sulfo-D-erythrose + D-xylulose 5-phosphate. It catalyses the reaction 4-deoxy-4-sulfo-D-erythrulose + D-glyceraldehyde 3-phosphate = sulfoacetaldehyde + D-xylulose 5-phosphate. Part of the sulfo-TK pathway, a D-sulfoquinovose degradation pathway that produces 2-hydroxyethane-1-sulfonate (isethionate). Catalyzes two steps of the pathway: the formation of 4-deoxy-4-sulfoerythrose (SE) and xylulose 5-phosphate from 6-deoxy-6-sulfo-D-fructose (SF) and glyceraldehyde 3-phosphate, and the formation of sulfoacetaldehyde (SA) and xylulose 5-phosphate from 4-deoxy-4-sulfo-D-erythrulose (SEu) and glyceraldehyde 3-phosphate. In Clostridium sp. (strain MSTE9), this protein is 6-deoxy-6-sulfo-D-fructose transketolase subunit SqwH.